The following is a 159-amino-acid chain: Phosphopantetheine adenylyltransferase (159 aa).

T9 contacts substrate. ATP is bound by residues 9-10 and H17; that span reads TF. Substrate-binding residues include K41, L73, and R87. ATP-binding positions include 88-90, E98, and 123-129; these read GLR and YAFLSST.

This sequence belongs to the bacterial CoaD family. As to quaternary structure, homohexamer. Requires Mg(2+) as cofactor.

The protein resides in the cytoplasm. It carries out the reaction (R)-4'-phosphopantetheine + ATP + H(+) = 3'-dephospho-CoA + diphosphate. It functions in the pathway cofactor biosynthesis; coenzyme A biosynthesis; CoA from (R)-pantothenate: step 4/5. Reversibly transfers an adenylyl group from ATP to 4'-phosphopantetheine, yielding dephospho-CoA (dPCoA) and pyrophosphate. This chain is Phosphopantetheine adenylyltransferase, found in Vibrio campbellii (strain ATCC BAA-1116).